The primary structure comprises 283 residues: tRNA pseudouridine synthase A (283 aa).

Asp52 serves as the catalytic Nucleophile. Residue Tyr148 participates in substrate binding.

This sequence belongs to the tRNA pseudouridine synthase TruA family. In terms of assembly, homodimer.

The enzyme catalyses uridine(38/39/40) in tRNA = pseudouridine(38/39/40) in tRNA. In terms of biological role, formation of pseudouridine at positions 38, 39 and 40 in the anticodon stem and loop of transfer RNAs. In Orientia tsutsugamushi (strain Ikeda) (Rickettsia tsutsugamushi), this protein is tRNA pseudouridine synthase A.